The sequence spans 330 residues: tRNA uridine(34) hydroxylase (330 aa).

One can recognise a Rhodanese domain in the interval 123–217 (SDPEVILVDT…YLEEVKQEES (95 aa)). C177 functions as the Cysteine persulfide intermediate in the catalytic mechanism.

It belongs to the TrhO family.

The catalysed reaction is uridine(34) in tRNA + AH2 + O2 = 5-hydroxyuridine(34) in tRNA + A + H2O. Functionally, catalyzes oxygen-dependent 5-hydroxyuridine (ho5U) modification at position 34 in tRNAs. The sequence is that of tRNA uridine(34) hydroxylase from Shewanella sp. (strain ANA-3).